The primary structure comprises 20 residues: Outer membrane protein 40Va (20 aa).

It belongs to the Gram-negative porin family. Homotrimer.

It localises to the cell outer membrane. Its function is as follows. Forms pores that allow passive diffusion of small molecules across the outer membrane. This Vibrio alginolyticus protein is Outer membrane protein 40Va.